The chain runs to 317 residues: Fruit protein pKIWI502 (317 aa).

The tract at residues 1 to 29 is disordered; it reads MSITLSRPSLSRPSLSRHPSLTLHSSLSH. The 112-residue stretch at 71–182 folds into the FAD-binding FR-type domain; that stretch reads YIWTPVPISR…TQIIGRGFDI (112 aa).

This Actinidia deliciosa (Kiwi) protein is Fruit protein pKIWI502.